The following is a 109-amino-acid chain: MEMDLNNRLTEDETLEQAYDIFLELAADNLDPADIILFNLQFEERGGAELFDPSEDWQEHVDFDLNPDFFAEVVIGLADSEDGEINDIFARVLLCREKDHKLCHILWRE.

It belongs to the putative dsDNA mimic protein family.

May act as a double-stranded DNA (dsDNA) mimic. Probably regulates the activity of a dsDNA-binding protein. This is Putative double-stranded DNA mimic protein CKO_01325 from Citrobacter koseri (strain ATCC BAA-895 / CDC 4225-83 / SGSC4696).